A 214-amino-acid chain; its full sequence is Large ribosomal subunit protein bL25 (214 aa).

2 disordered regions span residues 1–23 (MSNEFLLNAESRSDTGKGASRRL) and 182–214 (DHDQPVAAVHQPKVRASSDDDDAAEGEEAASEE). The segment covering 200 to 214 (DDDDAAEGEEAASEE) has biased composition (acidic residues).

This sequence belongs to the bacterial ribosomal protein bL25 family. CTC subfamily. In terms of assembly, part of the 50S ribosomal subunit; part of the 5S rRNA/L5/L18/L25 subcomplex. Contacts the 5S rRNA. Binds to the 5S rRNA independently of L5 and L18.

In terms of biological role, this is one of the proteins that binds to the 5S RNA in the ribosome where it forms part of the central protuberance. This chain is Large ribosomal subunit protein bL25, found in Alcanivorax borkumensis (strain ATCC 700651 / DSM 11573 / NCIMB 13689 / SK2).